The primary structure comprises 91 residues: ATP synthase subunit c (91 aa).

Helical transmembrane passes span 4-24 (FTMCVLAAGIGMALGTLGTGI) and 53-73 (IGLAMIESLAIYALVVCLIIL).

The protein belongs to the ATPase C chain family. F-type ATPases have 2 components, F(1) - the catalytic core - and F(0) - the membrane proton channel. F(1) has five subunits: alpha(3), beta(3), gamma(1), delta(1), epsilon(1). F(0) has three main subunits: a(1), b(2) and c(10-14). The alpha and beta chains form an alternating ring which encloses part of the gamma chain. F(1) is attached to F(0) by a central stalk formed by the gamma and epsilon chains, while a peripheral stalk is formed by the delta and b chains.

It is found in the cell inner membrane. Functionally, f(1)F(0) ATP synthase produces ATP from ADP in the presence of a proton or sodium gradient. F-type ATPases consist of two structural domains, F(1) containing the extramembraneous catalytic core and F(0) containing the membrane proton channel, linked together by a central stalk and a peripheral stalk. During catalysis, ATP synthesis in the catalytic domain of F(1) is coupled via a rotary mechanism of the central stalk subunits to proton translocation. Key component of the F(0) channel; it plays a direct role in translocation across the membrane. A homomeric c-ring of between 10-14 subunits forms the central stalk rotor element with the F(1) delta and epsilon subunits. The sequence is that of ATP synthase subunit c from Geotalea daltonii (strain DSM 22248 / JCM 15807 / FRC-32) (Geobacter daltonii).